The chain runs to 758 residues: Aspartyl/asparaginyl beta-hydroxylase (758 aa).

The tract at residues 1-46 is disordered; that stretch reads MAQRKNAKSSGNSSSSGSGSGSTSAGSSSPGARRETKHGGHKNGRK. Residues 1-53 are Cytoplasmic-facing; it reads MAQRKNAKSSGNSSSSGSGSGSTSAGSSSPGARRETKHGGHKNGRKGGLSGTS. Residues 9-31 show a composition bias toward low complexity; sequence SSGNSSSSGSGSGSTSAGSSSPG. S14 is modified (phosphoserine). Residues 54–74 form a helical; Signal-anchor for type II membrane protein membrane-spanning segment; that stretch reads FFTWFMVIALLGVWTSVAVVW. N-linked (GlcNAc...) asparagine glycosylation is present at L64. Over 75–758 the chain is Lumenal; it reads FDLVDYEEVL…PQQRRSLPAI (684 aa). Positions 91, 93, 95, 97, and 102 each coordinate Ca(2+). Disordered regions lie at residues 111 to 140 and 304 to 324; these read ERST…EAEP and EEQQ…EQKA. Residues 313–324 show a composition bias toward basic and acidic residues; sequence TNRKTDDPEQKA. Residues 341-374 form a TPR 1 repeat; that stretch reads IKAELDAAEKLRKRGKIEEAVNAFKELVRKYPQS. An N-linked (GlcNAc...) asparagine glycan is attached at N452. 3 TPR repeats span residues 454–487, 489–521, and 525–557; these read TSLK…TPND, FAKV…GDPG, and GRFY…GHFA. W625 serves as a coordination point for 2-oxoglutarate. Residues C641 and C648 are joined by a disulfide bond. S668 contributes to the 2-oxoglutarate binding site. Position 679 (H679) interacts with Fe cation. 688–690 contributes to the 2-oxoglutarate binding site; sequence RMH. N-linked (GlcNAc...) asparagine glycosylation occurs at N706. H725 serves as a coordination point for Fe cation. Position 735 (R735) interacts with 2-oxoglutarate.

Belongs to the aspartyl/asparaginyl beta-hydroxylase family. As to quaternary structure, monomer. Isoform 8 interacts with ORAI1 and STIM1. Isoform 4 interacts with CASQ2. Fe cation serves as cofactor. Isoform 1 is detected in all tissues tested. Isoform 8 is mainly expressed in pancreas, heart, brain, kidney and liver. Isoform 8 is expressed in kidney (at protein level).

It localises to the endoplasmic reticulum membrane. Its subcellular location is the sarcoplasmic reticulum membrane. It catalyses the reaction L-aspartyl-[protein] + 2-oxoglutarate + O2 = 3-hydroxy-L-aspartyl-[protein] + succinate + CO2. Its function is as follows. Specifically hydroxylates an Asp or Asn residue in certain epidermal growth factor-like (EGF) domains of a number of proteins. Functionally, membrane-bound Ca(2+)-sensing protein, which is a structural component of the ER-plasma membrane junctions. Isoform 8 regulates the activity of Ca(+2) released-activated Ca(+2) (CRAC) channels in T-cells. The chain is Aspartyl/asparaginyl beta-hydroxylase (ASPH) from Homo sapiens (Human).